A 681-amino-acid chain; its full sequence is DNA ligase (681 aa).

NAD(+)-binding positions include 44-48 (DYIYD), 94-95 (SL), and Glu124. Residue Lys126 is the N6-AMP-lysine intermediate of the active site. NAD(+) is bound by residues Arg147, Glu181, Lys297, and Lys321. Zn(2+) contacts are provided by Cys415, Cys418, Cys433, and Cys438. One can recognise a BRCT domain in the interval 598–681 (DETSFFYGKK…EAQAKEGTDK (84 aa)).

It belongs to the NAD-dependent DNA ligase family. LigA subfamily. The cofactor is Mg(2+). Mn(2+) is required as a cofactor.

It carries out the reaction NAD(+) + (deoxyribonucleotide)n-3'-hydroxyl + 5'-phospho-(deoxyribonucleotide)m = (deoxyribonucleotide)n+m + AMP + beta-nicotinamide D-nucleotide.. Its function is as follows. DNA ligase that catalyzes the formation of phosphodiester linkages between 5'-phosphoryl and 3'-hydroxyl groups in double-stranded DNA using NAD as a coenzyme and as the energy source for the reaction. It is essential for DNA replication and repair of damaged DNA. The polypeptide is DNA ligase (Leuconostoc citreum (strain KM20)).